A 239-amino-acid chain; its full sequence is Probable transcriptional regulatory protein BPUM_0743 (239 aa).

The protein belongs to the TACO1 family. YeeN subfamily.

It is found in the cytoplasm. This is Probable transcriptional regulatory protein BPUM_0743 from Bacillus pumilus (strain SAFR-032).